The chain runs to 126 residues: Ribonuclease P protein component (126 aa).

It belongs to the RnpA family. As to quaternary structure, consists of a catalytic RNA component (M1 or rnpB) and a protein subunit.

It catalyses the reaction Endonucleolytic cleavage of RNA, removing 5'-extranucleotides from tRNA precursor.. Its function is as follows. RNaseP catalyzes the removal of the 5'-leader sequence from pre-tRNA to produce the mature 5'-terminus. It can also cleave other RNA substrates such as 4.5S RNA. The protein component plays an auxiliary but essential role in vivo by binding to the 5'-leader sequence and broadening the substrate specificity of the ribozyme. The polypeptide is Ribonuclease P protein component (Rhodococcus erythropolis (strain PR4 / NBRC 100887)).